The following is a 718-amino-acid chain: Centromere/kinetochore protein zw10 (718 aa).

It belongs to the ZW10 family.

The protein localises to the cytoplasm. The protein resides in the nucleus. It localises to the chromosome. It is found in the centromere. Its subcellular location is the kinetochore. In terms of biological role, required for accurate chromosome segregation. The polypeptide is Centromere/kinetochore protein zw10 (mit(1)15) (Drosophila pseudoobscura pseudoobscura (Fruit fly)).